The chain runs to 678 residues: Vitrin (678 aa).

A signal peptide spans M1 to S26. Residues T40 to F133 form the LCCL domain. Cystine bridges form between C46–C62 and C66–C86. A compositionally biased stretch (polar residues) spans S154 to A168. Disordered stretches follow at residues S154–T177 and T199–F257. Low complexity predominate over residues T199–P216. Positions S230–R240 are enriched in polar residues. VWFA domains lie at D293–V478 and D495–I668. Residues N390 and N520 are each glycosylated (N-linked (GlcNAc...) asparagine).

In terms of assembly, binds dermatan sulfate and chondroitin sulfate.

The protein localises to the secreted. The protein resides in the extracellular space. It localises to the extracellular matrix. Promotes matrix assembly and cell adhesiveness. Plays a role in spinal cord formation by regulating the proliferation and differentiation of neural stem cells. This Homo sapiens (Human) protein is Vitrin (VIT).